A 233-amino-acid chain; its full sequence is Cysteine-rich venom protein (233 aa).

An N-terminal signal peptide occupies residues 1–12 (PILAAVLQQSSG). The SCP domain occupies 31–159 (VDLHNSLRRS…PYSYFFVCQY (129 aa)). 8 cysteine pairs are disulfide-bonded: Cys68–Cys146, Cys85–Cys160, Cys141–Cys157, Cys179–Cys186, Cys182–Cys191, Cys195–Cys228, Cys204–Cys222, and Cys213–Cys226. The ShKT domain occupies 195-228 (CTRENKFTNCNTMVQQSSCQDNYMKTNCPASCFC).

The protein belongs to the CRISP family. Expressed by the venom gland.

The protein localises to the secreted. Its function is as follows. Blocks contraction of smooth muscle elicited by high potassium-induced depolarization, but does not block caffeine-stimulated contraction. May target voltage-gated calcium channels on smooth muscle. The polypeptide is Cysteine-rich venom protein (Trimeresurus stejnegeri (Chinese green tree viper)).